A 138-amino-acid polypeptide reads, in one-letter code: Actophorin (138 aa).

Blocked amino end (Ser) is present on Ser2. An ADF-H domain is found at 3 to 134; the sequence is GIAVSDDCVQ…SEDAVSERAK (132 aa).

The protein belongs to the actin-binding proteins ADF family. Monomer.

The protein localises to the cytoplasm. Its function is as follows. Forms a one to one complex with monomeric actin. Can regulate the pool available for polymerization. Severs actin filaments in a dose-dependent manner. The protein is Actophorin of Acanthamoeba castellanii (Amoeba).